We begin with the raw amino-acid sequence, 444 residues long: N-succinylarginine dihydrolase (444 aa).

Residues Ala19 to Ser28, Asn110, and His137 to Arg138 each bind substrate. Residue Glu174 is part of the active site. Substrate is bound at residue Arg214. His250 is an active-site residue. Substrate-binding residues include Asp252 and Asn362. Residue Cys368 is the Nucleophile of the active site.

The protein belongs to the succinylarginine dihydrolase family. As to quaternary structure, homodimer.

It carries out the reaction N(2)-succinyl-L-arginine + 2 H2O + 2 H(+) = N(2)-succinyl-L-ornithine + 2 NH4(+) + CO2. It functions in the pathway amino-acid degradation; L-arginine degradation via AST pathway; L-glutamate and succinate from L-arginine: step 2/5. Functionally, catalyzes the hydrolysis of N(2)-succinylarginine into N(2)-succinylornithine, ammonia and CO(2). The polypeptide is N-succinylarginine dihydrolase (Shewanella denitrificans (strain OS217 / ATCC BAA-1090 / DSM 15013)).